The sequence spans 549 residues: Glutamyl-tRNA(Gln) amidotransferase subunit B, chloroplastic/mitochondrial (549 aa).

This sequence belongs to the GatB/GatE family. GatB subfamily. In terms of assembly, subunit of the heterotrimeric GatCAB amidotransferase (AdT) complex, composed of A, B and C subunits.

Its subcellular location is the mitochondrion. The protein resides in the plastid. It localises to the chloroplast. It carries out the reaction L-glutamyl-tRNA(Gln) + L-glutamine + ATP + H2O = L-glutaminyl-tRNA(Gln) + L-glutamate + ADP + phosphate + H(+). In terms of biological role, allows the formation of correctly charged Gln-tRNA(Gln) through the transamidation of misacylated Glu-tRNA(Gln) in chloroplasts and mitochondria. The reaction takes place in the presence of glutamine and ATP through an activated gamma-phospho-Glu-tRNA(Gln). This chain is Glutamyl-tRNA(Gln) amidotransferase subunit B, chloroplastic/mitochondrial, found in Ricinus communis (Castor bean).